The chain runs to 512 residues: Bifunctional purine biosynthesis protein PurH (512 aa).

Residues 1–146 form the MGS-like domain; it reads MTIKRALISV…KNHQDVTVIV (146 aa).

It belongs to the PurH family.

It carries out the reaction (6R)-10-formyltetrahydrofolate + 5-amino-1-(5-phospho-beta-D-ribosyl)imidazole-4-carboxamide = 5-formamido-1-(5-phospho-D-ribosyl)imidazole-4-carboxamide + (6S)-5,6,7,8-tetrahydrofolate. The enzyme catalyses IMP + H2O = 5-formamido-1-(5-phospho-D-ribosyl)imidazole-4-carboxamide. The protein operates within purine metabolism; IMP biosynthesis via de novo pathway; 5-formamido-1-(5-phospho-D-ribosyl)imidazole-4-carboxamide from 5-amino-1-(5-phospho-D-ribosyl)imidazole-4-carboxamide (10-formyl THF route): step 1/1. Its pathway is purine metabolism; IMP biosynthesis via de novo pathway; IMP from 5-formamido-1-(5-phospho-D-ribosyl)imidazole-4-carboxamide: step 1/1. In Bacillus subtilis (strain 168), this protein is Bifunctional purine biosynthesis protein PurH.